The primary structure comprises 179 residues: Signal peptidase complex subunit 3 (179 aa).

Topologically, residues 1 to 12 are cytoplasmic; it reads MHTVLTRGNATV. A helical; Signal-anchor for type II membrane protein membrane pass occupies residues 13–33; it reads AYTLSVLACLTFSCFLSTVFL. At 34–179 the chain is on the lumenal side; the sequence is DYRTDANINT…FPADYATSSI (146 aa). 2 N-linked (GlcNAc...) asparagine glycosylation sites follow: Asn73 and Asn141.

It belongs to the SPCS3 family. As to quaternary structure, component of the signal peptidase complex (SPC) composed of a catalytic subunit twr/SEC11 and three accessory subunits Spase12/SPCS1, Spase25/SPCS2 and Spase22-23/SPCS3. The complex induces a local thinning of the ER membrane which is used to measure the length of the signal peptide (SP) h-region of protein substrates. This ensures the selectivity of the complex towards h-regions shorter than 18-20 amino acids.

The protein resides in the endoplasmic reticulum membrane. Essential component of the signal peptidase complex (SPC) which catalyzes the cleavage of N-terminal signal sequences from nascent proteins as they are translocated into the lumen of the endoplasmic reticulum. Essential for the SPC catalytic activity, possibly by stabilizing and positioning the active center of the complex close to the lumenal surface. In terms of biological role, (Microbial infection) Plays an important role in infection by flaviviruses such as West Nile virus and Dengue virus type 2. The polypeptide is Signal peptidase complex subunit 3 (Spase22-23) (Drosophila melanogaster (Fruit fly)).